The chain runs to 701 residues: MDDFSNLEKHESELGAFFGDLAFEEDSRSEDISLEGLQQELEECESDEVVANILSSGDKLREYAKGVENNLRKVELDSVEVAILLPDYIKESDKLVSLHDQIRDCNCILSQMETLLSGFQEEIGSISSDIKILQENSMDMGLRLKNRRVTESKLAKFVEDFIVPPKMIHVIVDGEVNEEYIKTLGILSKKLKFVETDQAVKSSKALKDVEPELEKLRQKAISKVYDFIVQKLIALRKPKTNIQILQQSVFLKYKYIISFLKEHGKEVFMDVRAAYIDTMNKVLSAHFQSYIQAFEKLQLDIATSNDLIGVDTRSTGLFSRSKEPLKNRCAVFALGERIQIIKEIDQPALIPHIAEASSLKYPYEVLFRSLHKLLMDTATSEYIFCEDFFGEQSIFYEIFAGPFSVIYEHLDSVLSSCYDAIGLLLMIRIIHHHQLIMSRRRIPCLDSYLDKVNISLWPRFKTVFDLHIGSLRNANINTIWEDDVHPHYIMRRYAEFTASFIHLNVEYGDGQLDINLERLRMAVDSLILKLAKLFPRPKQQMVFLINNYDMTIAVLKEAEPEGGKIQMHFEELLKSNTSLFAEELLVEHFSDMIKFVKSRANEDSSPNLERSITVAEVEPLVKDFGSRWKTAIELMHKDIITCFSNFLCGMDILIAGMTQLLLYYTRLEDCIKKIDGGSALNRDIVNYQSIMFEIKKYKKTF.

2 coiled-coil regions span residues 23-45 (FEED…EECE) and 511-533 (QLDI…LAKL).

Belongs to the VPS52 family. In terms of assembly, component of the Golgi-associated retrograde protein (GARP) complex. As to expression, detected in pollen.

Its subcellular location is the golgi apparatus. The protein localises to the trans-Golgi network membrane. It localises to the endosome membrane. It is found in the golgi apparatus membrane. May be involved in retrograde transport of early and late endosomes to the late Golgi. The sequence is that of Vacuolar protein sorting-associated protein 52 B (P2) from Arabidopsis thaliana (Mouse-ear cress).